Reading from the N-terminus, the 409-residue chain is Casein kinase II subunit alpha-1 (409 aa).

An N-terminal signal peptide occupies residues methionine 1 to histidine 35. Residue asparagine 72 is glycosylated (N-linked (GlcNAc...) asparagine). In terms of domain architecture, Protein kinase spans tyrosine 110–phenylalanine 395. ATP-binding positions include valine 116–valine 124 and lysine 139. Asparagine 188 is a glycosylation site (N-linked (GlcNAc...) asparagine). Aspartate 227 functions as the Proton acceptor in the catalytic mechanism.

The protein belongs to the protein kinase superfamily. Ser/Thr protein kinase family. CK2 subfamily. Heterotetramer of two catalytic alpha subunits and two regulatory beta subunits. As to expression, seems to be present in all plant organs. But seems to be less expressed than CKA2.

It is found in the nucleus. It localises to the nucleolus. The enzyme catalyses L-seryl-[protein] + ATP = O-phospho-L-seryl-[protein] + ADP + H(+). The catalysed reaction is L-threonyl-[protein] + ATP = O-phospho-L-threonyl-[protein] + ADP + H(+). Inhibited by heparin. Casein kinases are operationally defined by their preferential utilization of acidic proteins such as caseins as substrates. Phosphorylates casein in vitro. The alpha chain contains the catalytic site. The tetrameric holoenzyme CK2, composed of two alpha and two beta subunits, phosphorylates the transcription factor GBFl, resulting in stimulation of its DNA binding activity. CK2 phosphorylates the transcription factor PIF1 after an exposure to light, resulting in a proteasome-dependent degradation of PIF1 and promotion of photomorphogenesis. CK2 phosphorylates translation initiation factors. May participate in the regulation of the initiation of translation. Acts as a circadian clock component that maintains the correct period length through phosphorylation of CCA1. Required for the maintenance and control of genomic stability and chromatin structure. May act as an ectokinase that phosphorylates several extracellular proteins. The protein is Casein kinase II subunit alpha-1 of Arabidopsis thaliana (Mouse-ear cress).